Reading from the N-terminus, the 435-residue chain is GTPase Obg (435 aa).

One can recognise an Obg domain in the interval 1–158 (MFIDRAKIYV…RWLYLELKLL (158 aa)). Residues 159 to 328 (ADVGLVGLPN…LLELMEKYVR (170 aa)) form the OBG-type G domain. Residues 165–172 (GLPNAGKS), 190–194 (FTTKT), 211–214 (DIPG), 280–283 (NKID), and 309–311 (SAK) contribute to the GTP site. 2 residues coordinate Mg(2+): S172 and T192. The OCT domain occupies 343–426 (IQETKEGRVE…IGDYIFKYNA (84 aa)).

It belongs to the TRAFAC class OBG-HflX-like GTPase superfamily. OBG GTPase family. Monomer. Requires Mg(2+) as cofactor.

It is found in the cytoplasm. An essential GTPase which binds GTP, GDP and possibly (p)ppGpp with moderate affinity, with high nucleotide exchange rates and a fairly low GTP hydrolysis rate. Plays a role in control of the cell cycle, stress response, ribosome biogenesis and in those bacteria that undergo differentiation, in morphogenesis control. The polypeptide is GTPase Obg (Dictyoglomus thermophilum (strain ATCC 35947 / DSM 3960 / H-6-12)).